Consider the following 164-residue polypeptide: HTH-type transcriptional regulator IscR (164 aa).

An HTH rrf2-type domain is found at 2–131 (RLTSKGRYAV…NNITLDELVN (130 aa)). Residues 28 to 51 (LADISERQGISLSYLEQLFSRLRK) constitute a DNA-binding region (H-T-H motif). The [2Fe-2S] cluster site is built by cysteine 92, cysteine 98, and cysteine 104.

[2Fe-2S] cluster serves as cofactor.

Regulates the transcription of several operons and genes involved in the biogenesis of Fe-S clusters and Fe-S-containing proteins. This chain is HTH-type transcriptional regulator IscR, found in Pectobacterium carotovorum subsp. carotovorum (strain PC1).